A 406-amino-acid chain; its full sequence is Proteasome-activating nucleotidase 1 (406 aa).

The span at 1–12 (MTDTVEDVELPY) shows a compositional bias: acidic residues. The tract at residues 1 to 20 (MTDTVEDVELPYDDSASQQD) is disordered. A coiled-coil region spans residues 12 to 70 (YDDSASQQDKLEALEEQLSTLEEENEEMRDRLLDANAENNKYQQKLERLSHENKKLKQS). Residues 192-197 (GTGKTL) and His331 each bind ATP. The disordered stretch occupies residues 385–406 (AREKLDQDSEPAAATDVSRTFA). Positions 404–406 (TFA) are docks into pockets in the proteasome alpha-ring to cause gate opening.

The protein belongs to the AAA ATPase family. As to quaternary structure, homohexamer. The hexameric complex has a two-ring architecture resembling a top hat that caps the 20S proteasome core at one or both ends. Upon ATP-binding, the C-terminus of PAN interacts with the alpha-rings of the proteasome core by binding to the intersubunit pockets.

Its subcellular location is the cytoplasm. Its function is as follows. ATPase which is responsible for recognizing, binding, unfolding and translocation of substrate proteins into the archaeal 20S proteasome core particle. Is essential for opening the gate of the 20S proteasome via an interaction with its C-terminus, thereby allowing substrate entry and access to the site of proteolysis. Thus, the C-termini of the proteasomal ATPase function like a 'key in a lock' to induce gate opening and therefore regulate proteolysis. Unfolding activity requires energy from ATP hydrolysis, whereas ATP binding alone promotes ATPase-20S proteasome association which triggers gate opening, and supports translocation of unfolded substrates. In Halobacterium salinarum (strain ATCC 700922 / JCM 11081 / NRC-1) (Halobacterium halobium), this protein is Proteasome-activating nucleotidase 1.